We begin with the raw amino-acid sequence, 332 residues long: tRNA-dihydrouridine synthase B (332 aa).

Residues 16 to 18 (PMA) and Q70 contribute to the FMN site. Catalysis depends on C100, which acts as the Proton donor. Residues K139, 200 to 202 (NGD), and 224 to 225 (GR) each bind FMN.

The protein belongs to the Dus family. DusB subfamily. Requires FMN as cofactor.

It catalyses the reaction a 5,6-dihydrouridine in tRNA + NAD(+) = a uridine in tRNA + NADH + H(+). It carries out the reaction a 5,6-dihydrouridine in tRNA + NADP(+) = a uridine in tRNA + NADPH + H(+). Its function is as follows. Catalyzes the synthesis of 5,6-dihydrouridine (D), a modified base found in the D-loop of most tRNAs, via the reduction of the C5-C6 double bond in target uridines. The sequence is that of tRNA-dihydrouridine synthase B from Xanthomonas axonopodis pv. citri (strain 306).